The primary structure comprises 877 residues: Ewing's tumor-associated antigen 1 homolog (877 aa).

Positions 1-82 (MQLKDGGTGM…GRSPRGKETP (82 aa)) are disordered. A compositionally biased stretch (basic residues) spans 56–65 (AGTRSARRAQ). A Glycyl lysine isopeptide (Lys-Gly) (interchain with G-Cter in SUMO2) cross-link involves residue Lys-87. The short motif at 107–113 (IFWDQNS) is the ATR-activation domain (AAD) element. Coiled-coil stretches lie at residues 185–213 (KTKNREKELMKLAQQFDKNMEELDVIQEQ) and 306–335 (AFLNNSKTSLRKKNALLQEEIITTETLLTE). Residues Lys-416 and Lys-444 each participate in a glycyl lysine isopeptide (Lys-Gly) (interchain with G-Cter in SUMO2) cross-link. The tract at residues 450 to 479 (PSKTRNGELRNAGEHRFSSHPGDESRKVPF) is disordered. The span at 454–476 (RNGELRNAGEHRFSSHPGDESRK) shows a compositional bias: basic and acidic residues. Residue Ser-467 is modified to Phosphoserine. A Glycyl lysine isopeptide (Lys-Gly) (interchain with G-Cter in SUMO2) cross-link involves residue Lys-510. An RBM1 motif motif is present at residues 607-622 (GEVDDDLFCQACDDIE). Disordered stretches follow at residues 626–664 (QQENKGSEESESVSYTSTRGSRSSSTASKQASQSAPSKH) and 818–877 (ANQQ…ISLP). The segment covering 637 to 662 (SVSYTSTRGSRSSSTASKQASQSAPS) has biased composition (low complexity). Positions 818–833 (ANQQQSSINYSESLKP) are enriched in polar residues. Over residues 840-859 (ERNRKYSPEEIQRKRQEALV) the composition is skewed to basic and acidic residues. Residues 843–865 (RKYSPEEIQRKRQEALVRRKAKA) carry the RBM2 motif motif. Residues 868-877 (TVQSAPISLP) show a composition bias toward polar residues.

Interacts (via RBM1 motif) with RPA1. Interacts (via RBM2 motif) with RPA2. Interacts (via the ATR-activation domain motif) with ATR. Phosphorylated by ATR.

The protein localises to the nucleus. Its function is as follows. Replication stress response protein that accumulates at DNA damage sites and promotes replication fork progression and integrity. Recruited to stalled replication forks via interaction with the RPA complex and directly stimulates ATR kinase activity independently of TOPBP1. Probably only regulates a subset of ATR targets. This is Ewing's tumor-associated antigen 1 homolog from Mus musculus (Mouse).